The primary structure comprises 500 residues: L-arabinose isomerase (500 aa).

Glu-306, Glu-333, His-350, and His-450 together coordinate Mn(2+).

This sequence belongs to the arabinose isomerase family. As to quaternary structure, homohexamer. Mn(2+) serves as cofactor.

It carries out the reaction beta-L-arabinopyranose = L-ribulose. It functions in the pathway carbohydrate degradation; L-arabinose degradation via L-ribulose; D-xylulose 5-phosphate from L-arabinose (bacterial route): step 1/3. In terms of biological role, catalyzes the conversion of L-arabinose to L-ribulose. In Shigella flexneri serotype 5b (strain 8401), this protein is L-arabinose isomerase.